Here is a 193-residue protein sequence, read N- to C-terminus: Probable nicotinate-nucleotide adenylyltransferase (193 aa).

It belongs to the NadD family.

It carries out the reaction nicotinate beta-D-ribonucleotide + ATP + H(+) = deamido-NAD(+) + diphosphate. The protein operates within cofactor biosynthesis; NAD(+) biosynthesis; deamido-NAD(+) from nicotinate D-ribonucleotide: step 1/1. In terms of biological role, catalyzes the reversible adenylation of nicotinate mononucleotide (NaMN) to nicotinic acid adenine dinucleotide (NaAD). The protein is Probable nicotinate-nucleotide adenylyltransferase of Fusobacterium nucleatum subsp. nucleatum (strain ATCC 25586 / DSM 15643 / BCRC 10681 / CIP 101130 / JCM 8532 / KCTC 2640 / LMG 13131 / VPI 4355).